We begin with the raw amino-acid sequence, 490 residues long: Allantoin permease (490 aa).

A run of 12 helical transmembrane segments spans residues 36–56 (IWMGCIHNIPTYATVGGLIAI), 60–80 (PWQVLAIIITASLILFGALAL), 116–136 (AIMWLGIQTFAGSTALNILLL), 151–171 (ILGIHLSGLLSFVFFWAIHLL), 190–210 (LVYLVFGGMVWWAVDIAGGLG), 225–245 (TFWPFAAGVTGIIGIWATLIL), 265–285 (FYGLPGTFALFAFASITVTSG), 308–328 (YVIVLSVITLCIATISVNVAA), 350–370 (GSFITALLALFTVPWKLMESA), 373–393 (VYAFLGLIGGMLGPVAGVMMA), 425–445 (AFAATMLGALISLIGMYVPVL), and 448–468 (LYDISWFVGVLISFLFYIVLM).

The protein belongs to the purine-cytosine permease (2.A.39) family.

The protein localises to the cell membrane. It catalyses the reaction (S)-allantoin(in) + H(+)(in) = (S)-allantoin(out) + H(+)(out). Functionally, uptake of allantoin into the cell. Allantoin uptake is not dependent on sodium, and PucI is likely to be a proton-coupled symporter. Shows highest recognition for binding of allantoin, good recognition for binding of hydantoin, L-5-benzylhydantoin and 5-hydroxyhydantoin, and to a lesser extent for a range of nucleobases and nucleosides. In Bacillus subtilis (strain 168), this protein is Allantoin permease.